The primary structure comprises 219 residues: MKEKIIKAVVLGDVTIGKTSLLVTKKIGFPLEYIPTIFDNHYFEIKINDQIMRIGCWDTGGGEEYPRPLSYPQTNLFLILFSISSRNSFNNCETYWLPEVTKFLPSVPIILVGTKTDLRNCDDYKDKSTFVTYEEGLEMKDKINASAYLECSSLLNKGVDDLFDTMAIIGNNDLKSIIPNQLLRDHYNQSQRSEIYEAQRNNYENNNNNNNNNNKCIIC.

G12 to T19 contributes to the GTP binding site. The Effector region signature appears at Y33–H41. Residues D58–G62 and T114–D117 contribute to the GTP site. Cysteine methyl ester is present on C216. C216 carries the S-geranylgeranyl cysteine lipid modification. The propeptide at I217–C219 is removed in mature form.

Belongs to the small GTPase superfamily. Rho family.

It localises to the cell membrane. This is Rho-related protein racN (racN) from Dictyostelium discoideum (Social amoeba).